Here is an 885-residue protein sequence, read N- to C-terminus: Exosome complex component 10 (885 aa).

Residue Lys19 forms a Glycyl lysine isopeptide (Lys-Gly) (interchain with G-Cter in SUMO2) linkage. The 3'-5' exonuclease domain occupies 289–455 (HFISSLDELV…YIYDKMRLEM (167 aa)). Residues Asp313, Glu315, Asp371, and Asp440 each contribute to the Mg(2+) site. An HRDC domain is found at 503-583 (NTQQLTAFQL…QQAREMPLLK (81 aa)). Lys583 is covalently cross-linked (Glycyl lysine isopeptide (Lys-Gly) (interchain with G-Cter in SUMO1); alternate). Lys583 participates in a covalent cross-link: Glycyl lysine isopeptide (Lys-Gly) (interchain with G-Cter in SUMO2); alternate. Lys710 is covalently cross-linked (Glycyl lysine isopeptide (Lys-Gly) (interchain with G-Cter in SUMO2)). 2 stretches are compositionally biased toward basic and acidic residues: residues 776 to 794 (AAKKRERATSDPRTTEQKQ) and 804 to 816 (KPKDPEPPEKEFT). Residues 776 to 885 (AAKKRERATS…RGFRYNWPQR (110 aa)) are disordered. Residue Ser821 is modified to Phosphoserine. Residues Lys826, Lys833, and Lys859 each participate in a glycyl lysine isopeptide (Lys-Gly) (interchain with G-Cter in SUMO2) cross-link. Residues 831-848 (NSKSKVSSQFDPNKQTPS) are compositionally biased toward polar residues. Residues 861–871 (SVGNKSMSFPT) are compositionally biased toward polar residues. Lys873 is covalently cross-linked (Glycyl lysine isopeptide (Lys-Gly) (interchain with G-Cter in SUMO2)).

The protein belongs to the exosome component 10/RRP6 family. As to quaternary structure, component of the RNA exosome complex. The catalytically inactive RNA exosome core complex (Exo-9) associates with the catalytic subunit EXOSC10/RRP6 (via its N-terminus). Exo-9 may associate with DIS3 to form the nucleolar exosome complex, or DIS3L to form the cytoplasmic exosome complex. The RNA exosome complex interacts with cofactors C1D/RRP47, MPHOSPH6/MPP6 and MTREX/MTR4. Interacts with MTREX; the interaction with MTREX mediates the association of MTREX with nuclear RNA exosomes. Part of the small subunit (SSU) processome, composed of more than 70 proteins and the RNA chaperone small nucleolar RNA (snoRNA) U3. Interacts with ALYREF/THOC4. Interacts with DHX36; this interaction occurs in a RNase-insensitive manner. Interacts with NRDE2. Interacts (via C-terminus) with USP36 (via C-terminus); the interaction is facilitated by the association with RNA and promotes sumoylation of EXOSC10. The cofactor is Mg(2+). Sumoylated by USP36; sumoylation does not significantly affect EXOSC10 nucleolar localization and association with core exosome and USP36, but regulates the nucleolar RNA exosome activity in rRNA processing by promoting binding of EXOSC10 to pre-rRNAs. Effects of sumoylation on EXOSC10 levels vary between different studies. Sumoylation of EXOSC10 is required for the modulation of EXOSC10 effects on cellular protein translation and cell proliferation. Sumoylation is promoted by mild hypothermia.

Its subcellular location is the cytoplasm. It localises to the nucleus. The protein resides in the nucleolus. The protein localises to the nucleoplasm. Its activity is regulated as follows. Arginine-rich dipeptide repeat proteins expressed from C9orf72-derived repeat RNA interact with EXOSC10 and inhibit its ability to promote degradation of this RNA. In terms of biological role, catalytic component of the RNA exosome complex which has 3'-&gt;5' exoribonuclease activity and participates in a multitude of cellular RNA processing and degradation events. In the nucleus, the RNA exosome complex is involved in proper maturation of stable RNA species such as rRNA, snRNA and snoRNA, in the elimination of RNA processing by-products and non-coding 'pervasive' transcripts, such as antisense RNA species and promoter-upstream transcripts (PROMPTs), and of mRNAs with processing defects, thereby limiting or excluding their export to the cytoplasm. Part of the small subunit (SSU) processome, first precursor of the small eukaryotic ribosomal subunit. During the assembly of the SSU processome in the nucleolus, many ribosome biogenesis factors, an RNA chaperone and ribosomal proteins associate with the nascent pre-rRNA and work in concert to generate RNA folding, modifications, rearrangements and cleavage as well as targeted degradation of pre-ribosomal RNA by the RNA exosome. The RNA exosome may be involved in Ig class switch recombination (CSR) and/or Ig variable region somatic hypermutation (SHM) by targeting AICDA deamination activity to transcribed dsDNA substrates. In the cytoplasm, the RNA exosome complex is involved in general mRNA turnover and specifically degrades inherently unstable mRNAs containing AU-rich elements (AREs) within their 3' untranslated regions, and in RNA surveillance pathways, preventing translation of aberrant mRNAs. It seems to be involved in degradation of histone mRNA. EXOSC10 is required for nucleolar localization of C1D and probably mediates the association of MTREX, C1D and MPHOSPH6 with the RNA exosome involved in the maturation of 5.8S rRNA. Plays a role in the recruitment of replication protein A complex (RPA) and RAD51 to DNA double-strand breaks caused by irradiation, contributing to DNA repair by homologous recombination. Regulates levels of damage-induced RNAs in order to prevent DNA-RNA hybrid formation at DNA double-strand breaks and limit DNA end resection after damage. Plays a role in oocyte development, maturation and survival. Required for normal testis development and mitotic division of spermatogonia. Plays a role in proper embryo development. Required for global protein translation. Required for cell proliferation. Regulates metabolism of C9orf72-derived repeat RNA that can be translated into toxic dipeptide repeat proteins. The chain is Exosome complex component 10 from Homo sapiens (Human).